Here is a 366-residue protein sequence, read N- to C-terminus: NADH-quinone oxidoreductase subunit D (366 aa).

Belongs to the complex I 49 kDa subunit family. As to quaternary structure, NDH-1 is composed of 14 different subunits. Subunits NuoB, C, D, E, F, and G constitute the peripheral sector of the complex.

Its subcellular location is the cell membrane. The enzyme catalyses a quinone + NADH + 5 H(+)(in) = a quinol + NAD(+) + 4 H(+)(out). In terms of biological role, NDH-1 shuttles electrons from NADH, via FMN and iron-sulfur (Fe-S) centers, to quinones in the respiratory chain. The immediate electron acceptor for the enzyme in this species is believed to be a menaquinone. Couples the redox reaction to proton translocation (for every two electrons transferred, four hydrogen ions are translocated across the cytoplasmic membrane), and thus conserves the redox energy in a proton gradient. This is NADH-quinone oxidoreductase subunit D from Bacillus mycoides (strain KBAB4) (Bacillus weihenstephanensis).